Reading from the N-terminus, the 113-residue chain is Non-specific lipid-transfer protein (113 aa).

The first 24 residues, 1-24 (AQVMLMAVALVLMLAAVPRAAVAI), serve as a signal peptide directing secretion. 4 disulfides stabilise this stretch: C26-C73, C36-C50, C51-C96, and C71-C110. Residue D30 is the site of Cis-14-hydroxy-10,13-dioxo-7-heptadecenoic acid aspartate ester attachment.

It belongs to the plant LTP family.

Functionally, plant non-specific lipid-transfer proteins transfer phospholipids as well as galactolipids across membranes. May play a role in wax or cutin deposition in the cell walls of expanding epidermal cells and certain secretory tissues. This chain is Non-specific lipid-transfer protein, found in Triticum aestivum (Wheat).